The primary structure comprises 860 residues: GAS2-like protein 2 (860 aa).

Basic residues predominate over residues 1–12 (MSQHVGHGRRPR). The segment at 1 to 22 (MSQHVGHGRRPRTPGPPVRSIR) is disordered. The region spanning 32–159 (EAMKEDLAEW…CLLELGRRAW (128 aa)) is the Calponin-homology (CH) domain. The region spanning 201-273 (CHFHNLDQMV…HYLDKHDPCR (73 aa)) is the GAR domain. Disordered stretches follow at residues 281 to 459 (PGSF…SLAS), 473 to 574 (QLSE…RHTS), 697 to 743 (TTVR…KGKR), 758 to 781 (KLRP…IPKP), and 801 to 860 (ATLG…ESWV). Positions 301–316 (GPSQPQPTMTISRSQS) are enriched in polar residues. Over residues 347–364 (PPVRARTLREDPLPRSQE) the composition is skewed to basic and acidic residues. 2 stretches are compositionally biased toward polar residues: residues 365–393 (KPTP…STLS) and 473–485 (QLSE…SSSP). Positions 431–860 (QRLQIPEATS…PLSPEEESWV (430 aa)) are interaction with ADORA2A and GNAS. Residues 530–549 (NLDRSTHGHHSVEASGDHQT) show a composition bias toward basic and acidic residues. The span at 724–733 (RSCSDPSSDK) shows a compositional bias: polar residues. Positions 758–768 (KLRPRIRPRRD) are enriched in basic residues. A compositionally biased stretch (polar residues) spans 828–840 (SNISLESSIQPAE).

Belongs to the GAS2 family. Interacts with ADORA2A (via its cytoplasmic C-terminal domain). Interacts with GNAS, GNAL, GNAQ, and GNA13. Interacts with MAPRE1. Expressed in tracheal epithelial cells (at protein level).

The protein resides in the cytoplasm. Its subcellular location is the cytoskeleton. The protein localises to the cell membrane. It localises to the stress fiber. It is found in the cilium basal body. Its function is as follows. Involved in the cross-linking of microtubules and microfilaments. Regulates microtubule dynamics and stability by interacting with microtubule plus-end tracking proteins, such as MAPRE1, to regulate microtubule growth along actin stress fibers. Enhances ADORA2-mediated adenylyl cyclase activation by acting as a scaffold to recruit trimeric G-protein complexes to ADORA2A. Regulates ciliary orientation and performance in cells located in the airway. The chain is GAS2-like protein 2 (Gas2l2) from Mus musculus (Mouse).